A 137-amino-acid polypeptide reads, in one-letter code: Transcription antitermination protein NusB (137 aa).

This sequence belongs to the NusB family.

Involved in transcription antitermination. Required for transcription of ribosomal RNA (rRNA) genes. Binds specifically to the boxA antiterminator sequence of the ribosomal RNA (rrn) operons. This Actinobacillus pleuropneumoniae serotype 5b (strain L20) protein is Transcription antitermination protein NusB.